The sequence spans 671 residues: DNA ligase (671 aa).

NAD(+) is bound by residues 32 to 36 (DAEYD), 81 to 82 (SL), and glutamate 113. Lysine 115 acts as the N6-AMP-lysine intermediate in catalysis. Residues arginine 136, glutamate 173, lysine 290, and lysine 314 each coordinate NAD(+). Zn(2+) contacts are provided by cysteine 408, cysteine 411, cysteine 426, and cysteine 432. One can recognise a BRCT domain in the interval 593 to 671 (EIDSPFAGKT…ETEMLHLLGS (79 aa)).

It belongs to the NAD-dependent DNA ligase family. LigA subfamily. Requires Mg(2+) as cofactor. It depends on Mn(2+) as a cofactor.

It carries out the reaction NAD(+) + (deoxyribonucleotide)n-3'-hydroxyl + 5'-phospho-(deoxyribonucleotide)m = (deoxyribonucleotide)n+m + AMP + beta-nicotinamide D-nucleotide.. In terms of biological role, DNA ligase that catalyzes the formation of phosphodiester linkages between 5'-phosphoryl and 3'-hydroxyl groups in double-stranded DNA using NAD as a coenzyme and as the energy source for the reaction. It is essential for DNA replication and repair of damaged DNA. This chain is DNA ligase, found in Escherichia coli O6:K15:H31 (strain 536 / UPEC).